We begin with the raw amino-acid sequence, 325 residues long: UPF0285 protein MmarC5_0962 (325 aa).

The protein belongs to the UPF0285 family.

In Methanococcus maripaludis (strain C5 / ATCC BAA-1333), this protein is UPF0285 protein MmarC5_0962.